The following is an 851-amino-acid chain: Protein FAM13B (851 aa).

The region spanning 23–212 is the Rho-GAP domain; the sequence is IPLDELQQGG…GLLENYYEFF (190 aa). A compositionally biased stretch (basic and acidic residues) spans 556–565; it reads IKDAKHKNSD. The disordered stretch occupies residues 556–611; the sequence is IKDAKHKNSDGEFAPQTRPRSNTLPKSFGSSLDHEDGESEGEPRVIQKEKTPSKEA. Over residues 573-585 the composition is skewed to polar residues; sequence RPRSNTLPKSFGS. The segment covering 596–611 has biased composition (basic and acidic residues); the sequence is GEPRVIQKEKTPSKEA.

This sequence belongs to the FAM13 family.

The protein is Protein FAM13B (Fam13b) of Mus musculus (Mouse).